A 735-amino-acid polypeptide reads, in one-letter code: Probable pre-mRNA-splicing factor ATP-dependent RNA helicase prp43 (735 aa).

Over residues 1 to 12 (MEPAQKKLRQES) the composition is skewed to basic and acidic residues. The tract at residues 1-34 (MEPAQKKLRQESKNPYLAHLNNGDDSEEVVSSKG) is disordered. One can recognise a Helicase ATP-binding domain in the interval 85–250 (LKIYHENQII…FFDAPLLAVP (166 aa)). Residue 98-105 (GETGSGKT) coordinates ATP. Residues 197–200 (DEAH) carry the DEAH box motif. Residues 275–455 (TVLQIHVEEG…STVLELKKLG (181 aa)) enclose the Helicase C-terminal domain.

This sequence belongs to the DEAD box helicase family. DEAH subfamily. DDX15/PRP43 sub-subfamily.

It localises to the nucleus. It catalyses the reaction ATP + H2O = ADP + phosphate + H(+). Pre-mRNA processing factor involved in disassembly of spliceosomes after the release of mature mRNA. This chain is Probable pre-mRNA-splicing factor ATP-dependent RNA helicase prp43 (prp43), found in Schizosaccharomyces pombe (strain 972 / ATCC 24843) (Fission yeast).